The following is a 440-amino-acid chain: ATP-dependent protease ATPase subunit HslU (440 aa).

ATP contacts are provided by residues Val18, 60 to 65, Asp253, Glu318, and Arg390; that span reads GVGKTE.

Belongs to the ClpX chaperone family. HslU subfamily. A double ring-shaped homohexamer of HslV is capped on each side by a ring-shaped HslU homohexamer. The assembly of the HslU/HslV complex is dependent on binding of ATP.

It localises to the cytoplasm. ATPase subunit of a proteasome-like degradation complex; this subunit has chaperone activity. The binding of ATP and its subsequent hydrolysis by HslU are essential for unfolding of protein substrates subsequently hydrolyzed by HslV. HslU recognizes the N-terminal part of its protein substrates and unfolds these before they are guided to HslV for hydrolysis. This Methylococcus capsulatus (strain ATCC 33009 / NCIMB 11132 / Bath) protein is ATP-dependent protease ATPase subunit HslU.